We begin with the raw amino-acid sequence, 152 residues long: UPF0756 membrane protein EF_1246 (152 aa).

The next 4 membrane-spanning stretches (helical) occupy residues 4-24 (WLFL…SLLI), 52-72 (LGVT…QIGL), 85-105 (WLGI…VGLI), and 115-135 (LVFG…GPII).

Belongs to the UPF0756 family.

The protein resides in the cell membrane. This chain is UPF0756 membrane protein EF_1246, found in Enterococcus faecalis (strain ATCC 700802 / V583).